Here is a 561-residue protein sequence, read N- to C-terminus: uncharacterized protein (561 aa).

Disordered stretches follow at residues 369-390 and 429-515; these read SVPE…LSKG and EGLG…GESE. At S383 the chain carries Phosphoserine. Over residues 465 to 503 the composition is skewed to polar residues; sequence NISPESSRFGTPSDPNSSSQSLGNEVLSRPNSNSNSAES.

This is an uncharacterized protein from Schizosaccharomyces pombe (strain 972 / ATCC 24843) (Fission yeast).